A 2702-amino-acid polypeptide reads, in one-letter code: MAKDDNNLSSLVHELRERVAASASTPANNLRHSSGDEDALEIRFRAVIPNLLNTYVVPSLGNGREVTAVLKLVGHTARNIPGVFYHGTPSAILPVIARIIPFFAEPEFVPGHGVLLETVGSLLMLLRSNSRKAYRIFFHDALQAIQDMQPIASLHSIEPEVCESHIPFRCFCMSFSGIGGDLPDANKPRDGDGLVLNLLGANRWQPFATCILKLICKCLTEGTLYVQGLIHTSFFKAACSLVCCGGADVQMACFEFATLVGSILTFNILPHVALIQSIILLLSADEGLPVYRNTIYDSTIGRFLTAVYSSCSDAAVKLTAESLVLVLSHALQRTKSEELKASLCSAYVRIVKSCPPCIWKIHCLLELLHLPEPCFQLIECFKAVLIVLGPGCVRVETTKCGSHTSATSDRPVQGINAGKKRHIEDESTYKRKRQKVGDDIRRGVYFAPEFADETDGKDAASLREMLISTVESLKPPPAGPSLSQTESSIVALSMLTNAFCFCPWTDMTHRLFNQMYAWIPWIAGQVEETNPIMFDISIYLEGIHNLLLVGVDPQYEYTSKGNDLVAIQFLLKLPWTHYMLFKTPSSLVKSKCLSVGIWTKLGLQDGSDFDIFSWSLSDDFEQVQAVAAISMPLKVLFSGLGALLHMFPKLEHLLEEKELMIKKAIPQSLGFLSCLYGSSTTDSEKTACHLLLHEDLKKDETLNSLLQGFRCSKCDKFIEREDEKHFRIIETPEMVKLKMDHHRDYFNLQSLYFNLLYDESSEETQLACVEVIRRILGHTSPDILVRTRSQWIRCLQYLLVHVNTDVREAFCAQIGIFVQHPIVSCLFLSEDATEKSCERNFFNLIEHSLAAAKDLLVIQTLLETTAEVMVAVDVTSELFLICLFLLIDQLDHPNLIVRINASKLINRSCYIHVKGGFATLLSTASHIQNELFDNLSVRLTSRPNVVREFAEAVLGVETEELVRKMVPAVLPKLLVYWQENAQAANTLNELAKLIDTDVVPLIVNWLPRVLAFALNQEEDKNLLSVLQLYHSQIGSDNQEIFAAALPALLDELVCFVDIADTPETDRRLQRLPDAIKKISKVLTNAEDLPGFLQNHFVGLLNSIDRKMLHADDIFLQKQALKRIKLLIEMMGHYLSTYVPKLMVLLMHAIEKDALQSEGLLVLHFFTRKLADVSPSSIKYVISQIFAALIPFLEKEKEGPHVYLDEVVKILEELVLKNRDIVKEHICEFPLLPSIPSLGELNNAIQEARGLMSLKDQLRDIVNGMKHENLNVRYMVACELSKLLYNRNEDVAALIAGELVSDMEILSSLITYLLQGCAEESRTTVGQRLKLVCADCLGAIGAIDPAKVRVASCSRFKIQCSDDDLIFELIHKHLARAFRAAQDTIIQDSAALAIQELLKIAGCEPSLAGNVVVLTPQEHVQVNVSGSRRCGGNNEVKDRGQKLWDRFSNYVKELIAPCLTSRFQLPNVSDPGSAGPIYRPSMSFRRWLSYWIRKLTAFATGSRVSIFAACRGIVRHDMQTATYLLPYLVLDVVCHGTEAARLSISEEILSVLDAAASENSGVTINSFGVGQSEVCVQAVFTLLDNLGQWVDDVKQGVALSSSLQSSGGRQVAPKSKDQVSNSTTEQDHLLVQCKYVLELLLAIPKVTLARASFRCQAYARSLMYLESHVRGKSGSLNPAAEKTGIFENADVSSLMGIYSCLDEPDGLSGFASLSKSLNLQDQLLINKKSGNWADVFTACEQALQMEPTSVQRHSDVLNCLLNMCHHQTMVTHVDGLISRVPEYKKTWCTQGVQAAWRLGKWDLMDEYLDGADAEGLLFSSSDSNASFDRDVAKILHAMMKKDQYSVAEGIAISKQALIAPLAAAGMDSYTRAYPFVVKLHLLRELEDFQAVLNGDSYLEKSFSTSDQVFSKAVDNWENRLRFTQSSLWTREPLLAFRRLVFGASGLGAQVGNCWLQYAKLCRLAGHYETAHRAILEAQASGAPNVHMEKAKLLWITKRSDSAIIELQQSLLNMPEGVVDSTVISSINSLLMAPPNPEPTVRNTQSFKEKKDVAKTLLLYSKWIHHSGQKQKKDVLNLYTQVKELLPWEKGYFHLAKYYDELYVDARKCQQESSVFSSAGSKKGSVSSNLSTEKAGWDYLFKGMYFYAKALHSGHKNLFQALPRLLTLWFDFGTIYKTSGSAGNKELKSTHMKIMSLMRGCLKDLPTYQWLTVLPQLVSRICHQNADTVLMVKNIITSVLHQFPQQGLWIMAAVSKSTVPARREAAAEIIQGARKGFNQSDRGHNLFIQFASLTDHFIKLCFHGGQPRSKVINIATEFSALKRMMPLDIIMPIQQSLTISLPAFHMNNNERHSASVFSGSDLPTISGIADEAEILSSLQRPKKIILLGNDGIEYPFLCKPKDDLRKDARMMEFTAMINRLLSKYPESRRRKLYIRTFAVAPLTEDCGLVEWVPHTRGLRHILQDIYISCGKFDRQKTNPQIKRIYDQCAVKKEYEMLKTKILPMFPPVFHKWFLTTFSEPAAWFRSRVAYAHTTAVWSMVGHIVGLGDRHGENILFDSTSGDCVHVDFSCLFDKGLQLEKPELVPFRLTQNMIDGLGITGYEGIFMRVCEITLTVLRTHRETLMSILETFIHDPLVEWTKSHKSSGVEVQNPHAQRAISSIEARLQGVVVGVPLPVEGQARRLIADAVSLENLGKMYIWWMPWF.

The 610-residue stretch at 1646 to 2255 (TLARASFRCQ…LWIMAAVSKS (610 aa)) folds into the FAT domain. A PI3K/PI4K catalytic domain is found at 2366 to 2678 (IADEAEILSS…GVPLPVEGQA (313 aa)). Residues 2372-2378 (ILSSLQR) form a G-loop region. The catalytic loop stretch occupies residues 2543 to 2551 (GLGDRHGEN). The tract at residues 2563–2587 (HVDFSCLFDKGLQLEKPELVPFRLT) is activation loop. The FATC domain maps to 2670–2702 (VPLPVEGQARRLIADAVSLENLGKMYIWWMPWF).

The protein belongs to the PI3/PI4-kinase family. ATM subfamily.

The protein resides in the nucleus. It carries out the reaction L-seryl-[protein] + ATP = O-phospho-L-seryl-[protein] + ADP + H(+). The enzyme catalyses L-threonyl-[protein] + ATP = O-phospho-L-threonyl-[protein] + ADP + H(+). Functionally, probable serine/threonine kinase. Plays a central role in cell-cycle regulation by transmitting DNA damage signals to downstream effectors of cell-cycle progression. May recognize the substrate consensus sequence [ST]-Q and phosphorylate histone variant H2AX to form H2AXS139ph at sites of DNA damage, thereby regulating DNA damage response mechanism. Seems to be required for the G2-phase checkpoint in response to replication blocks but not absolutely required in the G2-arrest response to double-strand breaks. May also be involved in the meiosis process. Required for the basal expression of RNR1 (ribonucleotide reductase large subunit). Acts in concert with telomerase to maintain telomeric DNA tracts. Not required for telomere length homeostasis. Required for effective immune responses that involve activation of DNA damage responses. In Arabidopsis thaliana (Mouse-ear cress), this protein is Serine/threonine-protein kinase ATR (ATR).